A 135-amino-acid polypeptide reads, in one-letter code: Small ribosomal subunit protein bS16 (135 aa).

A compositionally biased stretch (basic and acidic residues) spans 105 to 120; it reads DEKKKPVLKPKTEKAA. The disordered stretch occupies residues 105 to 135; it reads DEKKKPVLKPKTEKAAPEAAAPEAEATEEQA.

It belongs to the bacterial ribosomal protein bS16 family.

The chain is Small ribosomal subunit protein bS16 from Clavibacter sepedonicus (Clavibacter michiganensis subsp. sepedonicus).